The following is a 330-amino-acid chain: Phosphate acyltransferase (330 aa).

This sequence belongs to the PlsX family. In terms of assembly, homodimer. Probably interacts with PlsY.

The protein localises to the cytoplasm. The enzyme catalyses a fatty acyl-[ACP] + phosphate = an acyl phosphate + holo-[ACP]. It participates in lipid metabolism; phospholipid metabolism. Functionally, catalyzes the reversible formation of acyl-phosphate (acyl-PO(4)) from acyl-[acyl-carrier-protein] (acyl-ACP). This enzyme utilizes acyl-ACP as fatty acyl donor, but not acyl-CoA. The chain is Phosphate acyltransferase from Streptococcus agalactiae serotype III (strain NEM316).